A 378-amino-acid polypeptide reads, in one-letter code: MAKQDYYESLGVAKSADEREIKKAYKRLAMKYHPDRNPGDSEAEAKFKEIKEAYEILIDSQKRAAYDQYGHAAFEQGGMGGSGGGFGGGGADFGDIFGDVFGDIFGGGRRQRASRGSDLRYNMELTLEEAVRGVTKEIRIPALEECDVCHGNGAKPGSSPITCPTCHGNGQVQMRQGFFTVQQACPHCHGRGKIIKDPCVKCHGHGRVEKSKTLSVKIPAGVDTGDRIRLSGEGEAGEHGAPSGDLYVQVQVKAHPIFQREENNLYCEVPINFAMAALGGEIEVPTLDGRVKLKVPAETQTGKLFRMRGKGVKSVRGGAQGDLLCRVVVETPVNLNERQRQLLQELDESFGGPSGERNSPRSKSFFDGVKKFFDDLTR.

The J domain occupies 5–70 (DYYESLGVAK…QKRAAYDQYG (66 aa)). The CR-type zinc-finger motif lies at 133–211 (GVTKEIRIPA…CHGHGRVEKS (79 aa)). Cysteine 146, cysteine 149, cysteine 163, cysteine 166, cysteine 185, cysteine 188, cysteine 199, and cysteine 202 together coordinate Zn(2+). CXXCXGXG motif repeat units lie at residues 146-153 (CDVCHGNG), 163-170 (CPTCHGNG), 185-192 (CPHCHGRG), and 199-206 (CVKCHGHG).

Belongs to the DnaJ family. As to quaternary structure, homodimer. Zn(2+) is required as a cofactor.

The protein localises to the cytoplasm. In terms of biological role, participates actively in the response to hyperosmotic and heat shock by preventing the aggregation of stress-denatured proteins and by disaggregating proteins, also in an autonomous, DnaK-independent fashion. Unfolded proteins bind initially to DnaJ; upon interaction with the DnaJ-bound protein, DnaK hydrolyzes its bound ATP, resulting in the formation of a stable complex. GrpE releases ADP from DnaK; ATP binding to DnaK triggers the release of the substrate protein, thus completing the reaction cycle. Several rounds of ATP-dependent interactions between DnaJ, DnaK and GrpE are required for fully efficient folding. Also involved, together with DnaK and GrpE, in the DNA replication of plasmids through activation of initiation proteins. This Pectobacterium carotovorum subsp. carotovorum (strain PC1) protein is Chaperone protein DnaJ.